The sequence spans 491 residues: Lysine--tRNA ligase (491 aa).

Glutamate 400 and glutamate 407 together coordinate Mg(2+).

It belongs to the class-II aminoacyl-tRNA synthetase family. As to quaternary structure, homodimer. Mg(2+) serves as cofactor.

It is found in the cytoplasm. The catalysed reaction is tRNA(Lys) + L-lysine + ATP = L-lysyl-tRNA(Lys) + AMP + diphosphate. This Mesomycoplasma hyopneumoniae (strain 7448) (Mycoplasma hyopneumoniae) protein is Lysine--tRNA ligase.